The primary structure comprises 805 residues: Sucrose synthase (805 aa).

The tract at residues 275–752 is GT-B glycosyltransferase; sequence MVFNVVILSP…GLQRIEEKYT (478 aa).

The protein belongs to the glycosyltransferase 1 family. Plant sucrose synthase subfamily.

It carries out the reaction an NDP-alpha-D-glucose + D-fructose = a ribonucleoside 5'-diphosphate + sucrose + H(+). Sucrose-cleaving enzyme that provides UDP-glucose and fructose for various metabolic pathways. This Medicago sativa (Alfalfa) protein is Sucrose synthase.